The following is a 261-amino-acid chain: Lysoplasmalogenase (261 aa).

The next 8 helical transmembrane spans lie at 29 to 49, 65 to 85, 90 to 107, 111 to 133, 146 to 166, 172 to 192, 197 to 217, and 227 to 247; these read GWVV…VIAL, PAFK…HPIG, WLVP…LLAI, TWAF…GALL, VAAV…FWPH, LTIP…TALL, TIWT…IGIG, and AVPI…GFFF.

It belongs to the TMEM86 family.

Its subcellular location is the cell membrane. It catalyses the reaction a 1-O-(1Z-alkenyl)-sn-glycero-3-phosphocholine + H2O = a 2,3-saturated aldehyde + sn-glycerol 3-phosphocholine. It carries out the reaction a 1-O-(1Z-alkenyl)-sn-glycero-3-phosphoethanolamine + H2O = a 2,3-saturated aldehyde + sn-glycero-3-phosphoethanolamine. Its function is as follows. Specifically hydrolyzes the vinyl ether bond of lysoplasmenylcholine (pLPC) and lysoplasmenylethanolamine (pLPE) to release a fatty aldehyde and glycerophospho-choline or glycerophospho-ethanolamine. The protein is Lysoplasmalogenase of Mycobacterium bovis (strain ATCC BAA-935 / AF2122/97).